The following is a 169-amino-acid chain: Nucleoside diphosphate kinase 3-A (169 aa).

Residues lysine 29, arginine 105, threonine 111, arginine 122, valine 129, and asparagine 132 each contribute to the ADP site. Histidine 135 serves as the catalytic Pros-phosphohistidine intermediate.

It belongs to the NDK family. In terms of assembly, homohexamer. Mg(2+) is required as a cofactor.

It localises to the mitochondrion outer membrane. Its subcellular location is the cytoplasm. The protein resides in the cytoskeleton. The protein localises to the cilium basal body. The catalysed reaction is a 2'-deoxyribonucleoside 5'-diphosphate + ATP = a 2'-deoxyribonucleoside 5'-triphosphate + ADP. It carries out the reaction a ribonucleoside 5'-diphosphate + ATP = a ribonucleoside 5'-triphosphate + ADP. Catalyzes the phosphorylation of ribonucleosides and deoxyribonucleoside diphosphates, other than ATP, into the corresponding triphosphates with ATP as the major phosphate donor. The ATP gamma phosphate is transferred to the nucleoside diphosphate beta phosphate via a ping-pong mechanism, using a phosphorylated active-site intermediate. Through the catalyzed exchange of gamma-phosphate between di- and triphosphonucleosides participates in regulation of intracellular nucleotide homeostasis. Required for ciliary function during renal development. Its function is as follows. Independently of its kinase activity, facilitates mitochondrial tethering prior to membrane fusion through its direct membrane-binding and hexamerization. Implicated in repair of both single- and double-stranded breaks in DNA, independently of its kinase activity. The chain is Nucleoside diphosphate kinase 3-A from Xenopus laevis (African clawed frog).